The sequence spans 140 residues: Transcription antitermination protein NusB (140 aa).

Belongs to the NusB family.

Functionally, involved in transcription antitermination. Required for transcription of ribosomal RNA (rRNA) genes. Binds specifically to the boxA antiterminator sequence of the ribosomal RNA (rrn) operons. This is Transcription antitermination protein NusB from Leptospira biflexa serovar Patoc (strain Patoc 1 / Ames).